The chain runs to 99 residues: Cell division protein FtsB (99 aa).

At 1–3 (MKF) the chain is on the cytoplasmic side. The chain crosses the membrane as a helical span at residues 4–21 (FVITLIVLLGLLQYRLWS). The Periplasmic portion of the chain corresponds to 22–99 (GDNSLPEYFV…GDRAVSSPSQ (78 aa)). Residues 31–73 (VLQKQIAAQQDGNAKLNERNQVLKEEIIDLKSGTEAIEERARN) are a coiled coil.

Belongs to the FtsB family. Part of a complex composed of FtsB, FtsL and FtsQ.

The protein resides in the cell inner membrane. In terms of biological role, essential cell division protein. May link together the upstream cell division proteins, which are predominantly cytoplasmic, with the downstream cell division proteins, which are predominantly periplasmic. The chain is Cell division protein FtsB from Shewanella oneidensis (strain ATCC 700550 / JCM 31522 / CIP 106686 / LMG 19005 / NCIMB 14063 / MR-1).